Consider the following 353-residue polypeptide: Methionine import ATP-binding protein MetN (353 aa).

The ABC transporter domain occupies 7–249; sequence LENIDVTFKQ…PKEELSRQFV (243 aa). An ATP-binding site is contributed by 41-48; that stretch reads GYSGAGKS.

It belongs to the ABC transporter superfamily. Methionine importer (TC 3.A.1.24) family. The complex is composed of two ATP-binding proteins (MetN), two transmembrane proteins (MetI) and a solute-binding protein (MetQ).

The protein localises to the cell membrane. It catalyses the reaction L-methionine(out) + ATP + H2O = L-methionine(in) + ADP + phosphate + H(+). The catalysed reaction is D-methionine(out) + ATP + H2O = D-methionine(in) + ADP + phosphate + H(+). Part of the ABC transporter complex MetNIQ involved in methionine import. Responsible for energy coupling to the transport system. This Ligilactobacillus salivarius (strain UCC118) (Lactobacillus salivarius) protein is Methionine import ATP-binding protein MetN.